Here is a 329-residue protein sequence, read N- to C-terminus: Calponin-3 (329 aa).

At K23 the chain carries N6-acetyllysine. The Calponin-homology (CH) domain occupies 26 to 130; the sequence is HQAEEDLRNW…TLVALAGLAK (105 aa). K158 is modified (N6-methyllysine). Calponin-like repeat units lie at residues 164 to 189, 204 to 229, and 243 to 268; these read IGLQ…RHLY, ISLQ…RDIY, and ISLQ…RQVY. Positions 280-329 are disordered; the sequence is VIHNGSQGTGTNGSEISDSDYQAEYPDEYHGEYQDDYPRDYQYGDQGIDY. A compositionally biased stretch (basic and acidic residues) spans 306–318; the sequence is DEYHGEYQDDYPR.

This sequence belongs to the calponin family.

Its function is as follows. Thin filament-associated protein that is implicated in the regulation and modulation of smooth muscle contraction. It is capable of binding to actin, calmodulin and tropomyosin. The interaction of calponin with actin inhibits the actomyosin Mg-ATPase activity. In Bos taurus (Bovine), this protein is Calponin-3 (CNN3).